Reading from the N-terminus, the 268-residue chain is Protein c-ets-1-B (268 aa).

The helix HI-1 stretch occupies residues 131–139 (FKDYVRDRA). Positions 150 to 157 (AAALAGYT) are helix HI-2. The segment at residues 162–242 (IQLWQFLLEL…AGKRYVYRFV (81 aa)) is a DNA-binding region (ETS). The tract at residues 245–249 (LQSLL) is helix H4. Positions 253–259 (PEELHAM) are helix H5.

It belongs to the ETS family. Binds DNA as a homodimer; homodimerization is required for transcription activation.

It localises to the nucleus. The protein resides in the cytoplasm. With respect to regulation, autoinhibited by a module composed of four alpha helices (HI-1, HI-2, H4, and H5) that flank the DNA-binding ETS domain, reducing the affinity for DNA. Its function is as follows. Transcription factor. Directly controls the expression of cytokine and chemokine genes in a wide variety of different cellular contexts. This chain is Protein c-ets-1-B (ets1-b), found in Xenopus laevis (African clawed frog).